The sequence spans 480 residues: Chromosomal replication initiator protein DnaA (480 aa).

The segment at 1-71 (MNLTKVWNTT…REQLGSVVGF (71 aa)) is domain I, interacts with DnaA modulators. The segment at 71–139 (FPVDVRIVLA…LELHRAVRSS (69 aa)) is domain II. The disordered stretch occupies residues 91 to 115 (SINGRHAARDTRKSDHHAPLSGGYG). Residues 97-108 (AARDTRKSDHHA) are compositionally biased toward basic and acidic residues. The domain III, AAA+ region stretch occupies residues 140–356 (MLNPRYTFDR…GCLNRVTAYA (217 aa)). The ATP site is built by G184, G186, K187, and T188. Residues 357 to 480 (QMYNIPVTIE…IRERLMNSAV (124 aa)) are domain IV, binds dsDNA.

This sequence belongs to the DnaA family. As to quaternary structure, oligomerizes as a right-handed, spiral filament on DNA at oriC.

It localises to the cytoplasm. Its function is as follows. Plays an essential role in the initiation and regulation of chromosomal replication. ATP-DnaA binds to the origin of replication (oriC) to initiate formation of the DNA replication initiation complex once per cell cycle. Binds the DnaA box (a 9 base pair repeat at the origin) and separates the double-stranded (ds)DNA. Forms a right-handed helical filament on oriC DNA; dsDNA binds to the exterior of the filament while single-stranded (ss)DNA is stabiized in the filament's interior. The ATP-DnaA-oriC complex binds and stabilizes one strand of the AT-rich DNA unwinding element (DUE), permitting loading of DNA polymerase. After initiation quickly degrades to an ADP-DnaA complex that is not apt for DNA replication. Binds acidic phospholipids. The chain is Chromosomal replication initiator protein DnaA from Roseiflexus castenholzii (strain DSM 13941 / HLO8).